We begin with the raw amino-acid sequence, 98 residues long: Aspartyl/glutamyl-tRNA(Asn/Gln) amidotransferase subunit C (98 aa).

The protein belongs to the GatC family. As to quaternary structure, heterotrimer of A, B and C subunits.

The catalysed reaction is L-glutamyl-tRNA(Gln) + L-glutamine + ATP + H2O = L-glutaminyl-tRNA(Gln) + L-glutamate + ADP + phosphate + H(+). The enzyme catalyses L-aspartyl-tRNA(Asn) + L-glutamine + ATP + H2O = L-asparaginyl-tRNA(Asn) + L-glutamate + ADP + phosphate + 2 H(+). In terms of biological role, allows the formation of correctly charged Asn-tRNA(Asn) or Gln-tRNA(Gln) through the transamidation of misacylated Asp-tRNA(Asn) or Glu-tRNA(Gln) in organisms which lack either or both of asparaginyl-tRNA or glutaminyl-tRNA synthetases. The reaction takes place in the presence of glutamine and ATP through an activated phospho-Asp-tRNA(Asn) or phospho-Glu-tRNA(Gln). This is Aspartyl/glutamyl-tRNA(Asn/Gln) amidotransferase subunit C from Bifidobacterium adolescentis (strain ATCC 15703 / DSM 20083 / NCTC 11814 / E194a).